Reading from the N-terminus, the 245-residue chain is Acetylglutamate kinase (245 aa).

Substrate-binding positions include 41–42 (GG), arginine 63, and asparagine 156.

This sequence belongs to the acetylglutamate kinase family. ArgB subfamily.

The protein localises to the cytoplasm. It catalyses the reaction N-acetyl-L-glutamate + ATP = N-acetyl-L-glutamyl 5-phosphate + ADP. It functions in the pathway amino-acid biosynthesis; L-arginine biosynthesis; N(2)-acetyl-L-ornithine from L-glutamate: step 2/4. Functionally, catalyzes the ATP-dependent phosphorylation of N-acetyl-L-glutamate. This chain is Acetylglutamate kinase, found in Staphylococcus epidermidis (strain ATCC 35984 / DSM 28319 / BCRC 17069 / CCUG 31568 / BM 3577 / RP62A).